The primary structure comprises 108 residues: Probable 4-amino-4-deoxy-L-arabinose-phosphoundecaprenol flippase subunit ArnE (108 aa).

3 helical membrane passes run 36–56 (SLWL…LVLQ), 58–78 (LDVG…TLAG), and 85–105 (PVDV…FQLG).

This sequence belongs to the ArnE family. As to quaternary structure, heterodimer of ArnE and ArnF.

The protein resides in the cell inner membrane. It participates in bacterial outer membrane biogenesis; lipopolysaccharide biosynthesis. Translocates 4-amino-4-deoxy-L-arabinose-phosphoundecaprenol (alpha-L-Ara4N-phosphoundecaprenol) from the cytoplasmic to the periplasmic side of the inner membrane. The chain is Probable 4-amino-4-deoxy-L-arabinose-phosphoundecaprenol flippase subunit ArnE from Pseudomonas syringae pv. syringae (strain B728a).